A 147-amino-acid chain; its full sequence is uncharacterized protein (147 aa).

The interval 23–48 (EEVSQPEPNTANDSSTEYKGKSKDDF) is disordered. The segment covering 28 to 37 (PEPNTANDSS) has biased composition (polar residues). Positions 38 to 48 (TEYKGKSKDDF) are enriched in basic and acidic residues. Residues 85–105 (LMFCIIACSFICAIQFLFFII) form a helical membrane-spanning segment.

The protein resides in the membrane. This is an uncharacterized protein from Saccharomyces cerevisiae (strain ATCC 204508 / S288c) (Baker's yeast).